The chain runs to 467 residues: Zinc finger and BTB domain-containing protein 43 (467 aa).

Met-1 bears the N-acetylmethionine mark. The 65-residue stretch at 33–97 folds into the BTB domain; the sequence is CDVSIVVQGH…SYTGRLVMPA (65 aa). Disordered stretches follow at residues 134 to 153 and 162 to 227; these read LNHGSDHQSPSSSNYNGLVE and HTDF…EFHY. Over residues 140–149 the composition is skewed to polar residues; that stretch reads HQSPSSSNYN. Basic and acidic residues-rich tracts occupy residues 164–174 and 182–194; these read DFPKAQELRDG and KDELSSQVTEHEY. Glycyl lysine isopeptide (Lys-Gly) (interchain with G-Cter in SUMO2) cross-links involve residues Lys-182, Lys-247, Lys-297, and Lys-358. Residues 373–394 form a C2H2-type 1; atypical zinc finger; sequence YPCQCGKSFTHKSQRDRHMSMH. A C2H2-type 2 zinc finger spans residues 400 to 422; that stretch reads YGCSVCGKKFKMKHHLVGHMKIH. At Thr-423 the chain carries Phosphothreonine. A C2H2-type 3; atypical zinc finger spans residues 428–450; it reads YECNICAKRFMWRDSFHRHVTSC. A Glycyl lysine isopeptide (Lys-Gly) (interchain with G-Cter in SUMO2) cross-link involves residue Lys-458.

It belongs to the krueppel C2H2-type zinc-finger protein family. Interacts with BDP1.

It localises to the nucleus. May be involved in transcriptional regulation. The protein is Zinc finger and BTB domain-containing protein 43 (Zbtb43) of Mus musculus (Mouse).